The chain runs to 35 residues: KKYSCLEGETHKLKPSPEPNMQECTLYSGSSCCYA.

The cysteines at positions 5 and 32 are disulfide-linked.

It belongs to the folate receptor family.

In terms of biological role, required for the transport of riboflavin to the developing oocyte. This Struthio camelus (Common ostrich) protein is Riboflavin-binding protein.